A 229-amino-acid polypeptide reads, in one-letter code: DNA repair protein RecO (229 aa).

The protein belongs to the RecO family.

Functionally, involved in DNA repair and RecF pathway recombination. The sequence is that of DNA repair protein RecO from Legionella pneumophila subsp. pneumophila (strain Philadelphia 1 / ATCC 33152 / DSM 7513).